Reading from the N-terminus, the 355-residue chain is Fructose-bisphosphate aldolase, cytoplasmic isozyme (355 aa).

2 residues coordinate substrate: Arg52 and Lys142. Catalysis depends on Glu183, which acts as the Proton acceptor. Residue Lys225 is the Schiff-base intermediate with dihydroxyacetone-P of the active site.

It belongs to the class I fructose-bisphosphate aldolase family.

Its subcellular location is the cytoplasm. The enzyme catalyses beta-D-fructose 1,6-bisphosphate = D-glyceraldehyde 3-phosphate + dihydroxyacetone phosphate. It participates in carbohydrate degradation; glycolysis; D-glyceraldehyde 3-phosphate and glycerone phosphate from D-glucose: step 4/4. The polypeptide is Fructose-bisphosphate aldolase, cytoplasmic isozyme (Zea mays (Maize)).